Reading from the N-terminus, the 635-residue chain is MTTAEAAAPESRTFEADVAKLLHLMVHSVYSDKDVFLRELISNAADACEKLRYEAITTPALLGEDARPRITLAIDAEGGRLTVEDNGIGMSRDEMVEALGTIARSGTKAFMERIEAAAGGEKAELIGQFGVGFYSAFMVAEKVDVISRRAGADTANIWSSDGKGAYTVGEIDVAQAPARGTRVVLHLNEDGKAYADRFRIERIVKEQSGHVPVPIYIVEKLDAEPEEIADGVALWTKSKSDISAEDYADFYRSVAGQFDQPALTVHFRAEGRHEYTALVFVPSTKPFDLFEPERTGRVKLYVKRVFITDDAELLPRYLRFVRGVVDSADLPLNLSREMLQDSAILAAIRKGVTGRVLTELEKLAQSDAEAYAGIWSNFGAVLKEGLYEDYERRAQLLNLARFKTTTSGTAADTGWRTLKDYVADLKENQTAIYYITGDLARVEHAPQLEGFRARGVEVLLLPDQVDSFWVTAGVDYEGKPFKSVTQGAADLSLIPLPKSDEAETPEPEAKDTGDFIAFVKETLGDQVADVRASDRLTTSAVCLVAPESGIDRRLEKLLASAGRLGDAAKPVLEINPRHPLVAALAAHGASDSNFRADAAHLLLDQARVLDGDQPSDPQAFAERLMRVMQRGLPTA.

The interval 1–336 (MTTAEAAAPE…SADLPLNLSR (336 aa)) is a; substrate-binding. The interval 337–556 (EMLQDSAILA…ESGIDRRLEK (220 aa)) is b. The interval 557 to 635 (LLASAGRLGD…RVMQRGLPTA (79 aa)) is c.

It belongs to the heat shock protein 90 family. Homodimer.

It localises to the cytoplasm. Functionally, molecular chaperone. Has ATPase activity. The chain is Chaperone protein HtpG from Azorhizobium caulinodans (strain ATCC 43989 / DSM 5975 / JCM 20966 / LMG 6465 / NBRC 14845 / NCIMB 13405 / ORS 571).